A 375-amino-acid chain; its full sequence is 5-amino-6-(D-ribitylamino)uracil--L-tyrosine 4-hydroxyphenyl transferase 1 (375 aa).

The 235-residue stretch at 50–284 folds into the Radical SAM core domain; the sequence is VTYVVNRNIN…AVSRILFHGH (235 aa). The [4Fe-4S] cluster site is built by C64, C68, and C71.

The protein belongs to the radical SAM superfamily. CofH family. Consists of two subunits, CofG and CofH. It depends on [4Fe-4S] cluster as a cofactor.

The enzyme catalyses 5-amino-6-(D-ribitylamino)uracil + L-tyrosine + S-adenosyl-L-methionine = 5-amino-5-(4-hydroxybenzyl)-6-(D-ribitylimino)-5,6-dihydrouracil + 2-iminoacetate + 5'-deoxyadenosine + L-methionine + H(+). It participates in cofactor biosynthesis; coenzyme F0 biosynthesis. Its function is as follows. Catalyzes the radical-mediated synthesis of 5-amino-5-(4-hydroxybenzyl)-6-(D-ribitylimino)-5,6-dihydrouracil from 5-amino-6-(D-ribitylamino)uracil and L-tyrosine. In Methanosarcina acetivorans (strain ATCC 35395 / DSM 2834 / JCM 12185 / C2A), this protein is 5-amino-6-(D-ribitylamino)uracil--L-tyrosine 4-hydroxyphenyl transferase 1.